The sequence spans 127 residues: Fluoride-specific ion channel FluC (127 aa).

4 helical membrane-spanning segments follow: residues 4-24, 35-55, 71-91, and 103-123; these read TLLA…QLGV, LGTL…LAFF, TGLC…VMFL, and VLLN…LVTW. Glycine 75 and threonine 78 together coordinate Na(+).

It belongs to the fluoride channel Fluc/FEX (TC 1.A.43) family.

It is found in the cell inner membrane. The enzyme catalyses fluoride(in) = fluoride(out). Na(+) is not transported, but it plays an essential structural role and its presence is essential for fluoride channel function. In terms of biological role, fluoride-specific ion channel. Important for reducing fluoride concentration in the cell, thus reducing its toxicity. The protein is Fluoride-specific ion channel FluC of Pectobacterium atrosepticum (strain SCRI 1043 / ATCC BAA-672) (Erwinia carotovora subsp. atroseptica).